The sequence spans 303 residues: Ornithine carbamoyltransferase (303 aa).

Residues 53 to 56 (STRT), glutamine 80, arginine 104, and 131 to 134 (HPCQ) contribute to the carbamoyl phosphate site. L-ornithine contacts are provided by residues asparagine 162, aspartate 222, and 226-227 (SM). Carbamoyl phosphate-binding positions include 261 to 262 (CL) and arginine 289.

The protein belongs to the aspartate/ornithine carbamoyltransferase superfamily. OTCase family.

It localises to the cytoplasm. The catalysed reaction is carbamoyl phosphate + L-ornithine = L-citrulline + phosphate + H(+). It functions in the pathway amino-acid biosynthesis; L-arginine biosynthesis; L-arginine from L-ornithine and carbamoyl phosphate: step 1/3. Its function is as follows. Reversibly catalyzes the transfer of the carbamoyl group from carbamoyl phosphate (CP) to the N(epsilon) atom of ornithine (ORN) to produce L-citrulline. In Mesorhizobium japonicum (strain LMG 29417 / CECT 9101 / MAFF 303099) (Mesorhizobium loti (strain MAFF 303099)), this protein is Ornithine carbamoyltransferase.